We begin with the raw amino-acid sequence, 260 residues long: Indole-3-glycerol phosphate synthase (260 aa).

It belongs to the TrpC family.

It carries out the reaction 1-(2-carboxyphenylamino)-1-deoxy-D-ribulose 5-phosphate + H(+) = (1S,2R)-1-C-(indol-3-yl)glycerol 3-phosphate + CO2 + H2O. The protein operates within amino-acid biosynthesis; L-tryptophan biosynthesis; L-tryptophan from chorismate: step 4/5. The chain is Indole-3-glycerol phosphate synthase from Neisseria gonorrhoeae (strain ATCC 700825 / FA 1090).